A 774-amino-acid polypeptide reads, in one-letter code: Probable E3 ubiquitin-protein ligase HECTD2 (774 aa).

A disordered region spans residues 1–51 (MSEAARDLSPGAPPAVAAAAPEERKGKEPEREKLPPIVTAGAAAGLDRGSK). At Ser-9 the chain carries Phosphoserine. The segment covering 21–34 (PEERKGKEPEREKL) has biased composition (basic and acidic residues). The HECT domain maps to 435–774 (KRADLKKKLK…ISNSEGFGLE (340 aa)). Cys-742 (glycyl thioester intermediate) is an active-site residue.

It catalyses the reaction S-ubiquitinyl-[E2 ubiquitin-conjugating enzyme]-L-cysteine + [acceptor protein]-L-lysine = [E2 ubiquitin-conjugating enzyme]-L-cysteine + N(6)-ubiquitinyl-[acceptor protein]-L-lysine.. The protein operates within protein modification; protein ubiquitination. Its function is as follows. E3 ubiquitin-protein ligase which accepts ubiquitin from an E2 ubiquitin-conjugating enzyme in the form of a thioester and then directly transfers the ubiquitin to targeted substrates. The chain is Probable E3 ubiquitin-protein ligase HECTD2 (Hectd2) from Mus musculus (Mouse).